Here is a 20-residue protein sequence, read N- to C-terminus: ARCENFADSYRQPPISSSQT.

Residues 1–20 (ARCENFADSYRQPPISSSQT) are disordered.

Its function is as follows. Has antifungal activity against B.cinerea, F.oxysporum and M.arachidicola. Inhibits cell-free translation in rabbit reticulocyte lysate system. This is Cicerin from Cicer arietinum (Chickpea).